A 693-amino-acid chain; its full sequence is tRNA (guanine(27)-N(2))-dimethyltransferase (693 aa).

Residues H95–R99 carry the Nucleolar localization signal motif. A C2H2-type zinc finger spans residues Y144 to H166. Residues E187 to L648 enclose the Trm1 methyltransferase domain. Residues R220, D267, D317, and A318 each contribute to the S-adenosyl-L-methionine site. Zn(2+) is bound by residues C448, C451, C473, and C475. K545 is covalently cross-linked (Glycyl lysine isopeptide (Lys-Gly) (interchain with G-Cter in SUMO2)). 2 positions are modified to phosphoserine: S572 and S667.

This sequence belongs to the class I-like SAM-binding methyltransferase superfamily. Trm1 family.

It is found in the nucleus. Its subcellular location is the nucleolus. The catalysed reaction is guanosine(27) in tRNA(Tyr) + 2 S-adenosyl-L-methionine = N(2)-dimethylguanosine(27) in tRNA(Tyr) + 2 S-adenosyl-L-homocysteine + 2 H(+). Specifically dimethylates a single guanine residue at position 27 of tRNA(Tyr) using S-adenosyl-L-methionine as donor of the methyl groups. Dimethylation at position 27 of tRNA(Tyr) is required for efficient translation of tyrosine codons. Also required to maintain 3-(3-amino-3-carboxypropyl)uridine (acp3U) in the D-loop of several cytoplasmic tRNAs. The protein is tRNA (guanine(27)-N(2))-dimethyltransferase (TRMT1L) of Macaca fascicularis (Crab-eating macaque).